Here is a 253-residue protein sequence, read N- to C-terminus: Small ribosomal subunit protein eS4 (253 aa).

An S4 RNA-binding domain is found at 43-114 (LPLLLIVRNV…YPVKFFKLHP (72 aa)).

It belongs to the eukaryotic ribosomal protein eS4 family.

The polypeptide is Small ribosomal subunit protein eS4 (rps4e) (Aeropyrum pernix (strain ATCC 700893 / DSM 11879 / JCM 9820 / NBRC 100138 / K1)).